The sequence spans 242 residues: 3-dehydroquinate dehydratase (242 aa).

3-dehydroquinate contacts are provided by residues 39 to 41 and Arg-73; that span reads EIR. His-135 (proton donor/acceptor) is an active-site residue. Lys-162 functions as the Schiff-base intermediate with substrate in the catalytic mechanism. 2 residues coordinate 3-dehydroquinate: Arg-203 and Gln-228.

The protein belongs to the type-I 3-dehydroquinase family. In terms of assembly, homodimer.

The enzyme catalyses 3-dehydroquinate = 3-dehydroshikimate + H2O. It participates in metabolic intermediate biosynthesis; chorismate biosynthesis; chorismate from D-erythrose 4-phosphate and phosphoenolpyruvate: step 3/7. Functionally, involved in the third step of the chorismate pathway, which leads to the biosynthesis of aromatic amino acids. Catalyzes the cis-dehydration of 3-dehydroquinate (DHQ) and introduces the first double bond of the aromatic ring to yield 3-dehydroshikimate. This is 3-dehydroquinate dehydratase from Methanosarcina barkeri (strain Fusaro / DSM 804).